The primary structure comprises 425 residues: Metalloprotease AF_0655 (425 aa).

The protein belongs to the peptidase U62 family.

Functionally, probable metalloprotease. The polypeptide is Metalloprotease AF_0655 (Archaeoglobus fulgidus (strain ATCC 49558 / DSM 4304 / JCM 9628 / NBRC 100126 / VC-16)).